The following is a 213-amino-acid chain: Large ribosomal subunit protein uL3 (213 aa).

It belongs to the universal ribosomal protein uL3 family. As to quaternary structure, part of the 50S ribosomal subunit. Forms a cluster with proteins L14 and L19.

One of the primary rRNA binding proteins, it binds directly near the 3'-end of the 23S rRNA, where it nucleates assembly of the 50S subunit. The sequence is that of Large ribosomal subunit protein uL3 from Bifidobacterium longum subsp. infantis (strain ATCC 15697 / DSM 20088 / JCM 1222 / NCTC 11817 / S12).